Here is a 168-residue protein sequence, read N- to C-terminus: SPbeta prophage-derived uncharacterized protein YonX (168 aa).

Positions 1 to 53 (MNAQLFNLESRLDELENEINTQYCELDTNLDALKSNRIELESQLEKFESSLTN) form a coiled coil.

This chain is SPbeta prophage-derived uncharacterized protein YonX (yonX), found in Bacillus subtilis (strain 168).